The primary structure comprises 185 residues: Ribosome-recycling factor (185 aa).

This sequence belongs to the RRF family.

Its subcellular location is the cytoplasm. Functionally, responsible for the release of ribosomes from messenger RNA at the termination of protein biosynthesis. May increase the efficiency of translation by recycling ribosomes from one round of translation to another. This is Ribosome-recycling factor from Streptococcus thermophilus (strain ATCC BAA-491 / LMD-9).